Consider the following 337-residue polypeptide: Protein EXORDIUM-like 3 (337 aa).

Residues 1–25 (MHSLPVNLVLTVLTVFLTSPAQVIG) form the signal peptide. 3 N-linked (GlcNAc...) asparagine glycosylation sites follow: N34, N66, and N119.

It belongs to the EXORDIUM family.

It is found in the secreted. The protein localises to the extracellular space. Its subcellular location is the apoplast. Functionally, may play a role in a brassinosteroid-dependent regulation of growth and development. This is Protein EXORDIUM-like 3 (EXL3) from Arabidopsis thaliana (Mouse-ear cress).